The primary structure comprises 82 residues: Small ribosomal subunit protein bS16 (82 aa).

It belongs to the bacterial ribosomal protein bS16 family.

The polypeptide is Small ribosomal subunit protein bS16 (Crocosphaera subtropica (strain ATCC 51142 / BH68) (Cyanothece sp. (strain ATCC 51142))).